A 422-amino-acid polypeptide reads, in one-letter code: Adhesin YadA (422 aa).

The N-terminal stretch at 1–25 (MTKDFKISVSAALISALFSSPYAFA) is a signal peptide. Residues 26–330 (NNDEVHFTAV…KKAIRESNQY (305 aa)) form a surface exposed passenger domain region. Residues 206–236 (VNVAQLKKEIEKTQVNANKKSAEVLGIANNY) are a coiled coil. Residues 331 to 368 (TDHKFRQLDNRLDKLDTRVDKGLASSAALNSLFQPYGV) are outer membrane translocation of the passenger domain. 4 beta stranded membrane passes run 369-379 (GKVNFTAGVGG), 383-394 (SQALAIGSGYRV), 401-407 (KAGVAYA), and 411-422 (DVMYNASFNIEW). The tract at residues 369-422 (GKVNFTAGVGGYRSSQALAIGSGYRVNESVALKAGVAYAGSSDVMYNASFNIEW) is translocator domain.

Belongs to the autotransporter-2 (AT-2) (TC 1.B.40) family. In terms of assembly, homotrimer; trimers are very stable, not disrupted by heating at 95 degrees Celsius for 10 minutes in SDS sample buffer.

The protein resides in the cell surface. The protein localises to the cell outer membrane. Its function is as follows. Collagen-binding outer membrane protein forming a fibrillar matrix on the bacterial cell surface and phagocytosis resistance. Promotes initial attachment and invasion of eukaryotic cells. Also protects the bacteria by being responsible for agglutination, serum resistance and complement inactivation. Gly-389 plays an important role in this protein; replacing it with increasingly large polar residues decreases expression levels and trimer stability. Residues larger than Ser (Thr, Asn or His) significantly decrease serume resistance and bacterial autoagglution without affecting adhesion to host cells or host cell cytokine production. This is Adhesin YadA from Yersinia enterocolitica serotype O:8 / biotype 1B (strain NCTC 13174 / 8081).